The chain runs to 152 residues: Large ribosomal subunit protein bL9 (152 aa).

Belongs to the bacterial ribosomal protein bL9 family.

Its function is as follows. Binds to the 23S rRNA. The chain is Large ribosomal subunit protein bL9 from Synechococcus sp. (strain WH7803).